The following is a 276-amino-acid chain: Borealin (276 aa).

The interval 111–158 is disordered; the sequence is KEAKSSANSEDENMAPLKSTMKKKKASKKAPSTSKKPRTLSISKQGGT.

The protein belongs to the borealin family. As to quaternary structure, component of the CPC complex.

Its subcellular location is the nucleus. It is found in the chromosome. It localises to the centromere. The protein resides in the cytoplasm. The protein localises to the cytoskeleton. Its subcellular location is the spindle. Component of the chromosomal passenger complex (CPC), a complex that acts as a key regulator of mitosis. The CPC complex has essential functions at the centromere in ensuring correct chromosome alignment and segregation and is required for chromatin-induced microtubule stabilization and spindle assembly. The chain is Borealin (cdca8) from Danio rerio (Zebrafish).